The following is a 493-amino-acid chain: Transmembrane protein 145 (493 aa).

The chain crosses the membrane as a helical span at residues 9-29 (LRRLLPPLLLLLLSLPPRARA). N35 carries N-linked (GlcNAc...) asparagine glycosylation. The next 7 membrane-spanning stretches (helical) occupy residues 175–195 (VTFL…GYLL), 207–227 (MFMA…IYWG), 241–261 (ILAK…LILL), 282–302 (VYMT…AEFF), 318–338 (GLIG…LVSL), 349–369 (VPFF…ALIA), and 381–401 (IVNG…LIMT). N444 carries an N-linked (GlcNAc...) asparagine glycan. Residues 464 to 493 (PATSPLPRAAPDSGLPLFRDLRPPGPLRDL) form a disordered region.

It localises to the membrane. This Homo sapiens (Human) protein is Transmembrane protein 145 (TMEM145).